The sequence spans 651 residues: Probable Xaa-Pro aminopeptidase P (651 aa).

4 residues coordinate Mn(2+): Asp448, Asp459, Glu557, and Glu571.

The protein belongs to the peptidase M24B family. Mn(2+) serves as cofactor.

It catalyses the reaction Release of any N-terminal amino acid, including proline, that is linked to proline, even from a dipeptide or tripeptide.. Catalyzes the removal of a penultimate prolyl residue from the N-termini of peptides. The protein is Probable Xaa-Pro aminopeptidase P (AMPP) of Coccidioides posadasii (strain C735) (Valley fever fungus).